A 318-amino-acid chain; its full sequence is Coproporphyrin III ferrochelatase (318 aa).

Residues His-186 and Glu-268 each contribute to the Fe(2+) site.

It belongs to the ferrochelatase family.

It is found in the cytoplasm. It catalyses the reaction Fe-coproporphyrin III + 2 H(+) = coproporphyrin III + Fe(2+). Its pathway is porphyrin-containing compound metabolism; protoheme biosynthesis. Involved in coproporphyrin-dependent heme b biosynthesis. Catalyzes the insertion of ferrous iron into coproporphyrin III to form Fe-coproporphyrin III. The polypeptide is Coproporphyrin III ferrochelatase (Lactococcus lactis subsp. cremoris (strain MG1363)).